A 761-amino-acid polypeptide reads, in one-letter code: Pleckstrin homology domain-containing family M member 3 (761 aa).

The residue at position 132 (serine 132) is a Phosphoserine. PH domains follow at residues 211 to 308 (NILK…EVVH) and 361 to 456 (NILK…IAAN). The Phorbol-ester/DAG-type zinc-finger motif lies at 669-722 (SHVYSCSLCSQKGFICEICNNGEILYPFEDISTSRCESCGAVFHSECKEKSVPC).

As to quaternary structure, interacts with AKT1.

The protein localises to the cytoplasm. It localises to the golgi apparatus. It is found in the cell membrane. In terms of biological role, involved in skeletal muscle differentiation. May act as a scaffold protein for AKT1 during muscle differentiation. This Homo sapiens (Human) protein is Pleckstrin homology domain-containing family M member 3.